The sequence spans 113 residues: Iron-sulfur cluster insertion protein ErpA (113 aa).

Residues cysteine 41, cysteine 105, and cysteine 107 each coordinate iron-sulfur cluster.

This sequence belongs to the HesB/IscA family. In terms of assembly, homodimer. Iron-sulfur cluster is required as a cofactor.

In terms of biological role, required for insertion of 4Fe-4S clusters for at least IspG. In Aliivibrio salmonicida (strain LFI1238) (Vibrio salmonicida (strain LFI1238)), this protein is Iron-sulfur cluster insertion protein ErpA.